The primary structure comprises 461 residues: Bifunctional protein HldE (461 aa).

Residues 1–312 (MLEFLSQQKP…IKSFNRVDFE (312 aa)) are ribokinase. ATP is bound at residue 191–194 (NKKE). The active site involves Asp-259. The cytidylyltransferase stretch occupies residues 334-461 (FTNGCFDIVH…KIIEKIKDKK (128 aa)).

In the N-terminal section; belongs to the carbohydrate kinase PfkB family. The protein in the C-terminal section; belongs to the cytidylyltransferase family. As to quaternary structure, homodimer.

The catalysed reaction is D-glycero-beta-D-manno-heptose 7-phosphate + ATP = D-glycero-beta-D-manno-heptose 1,7-bisphosphate + ADP + H(+). It carries out the reaction D-glycero-beta-D-manno-heptose 1-phosphate + ATP + H(+) = ADP-D-glycero-beta-D-manno-heptose + diphosphate. The protein operates within nucleotide-sugar biosynthesis; ADP-L-glycero-beta-D-manno-heptose biosynthesis; ADP-L-glycero-beta-D-manno-heptose from D-glycero-beta-D-manno-heptose 7-phosphate: step 1/4. It participates in nucleotide-sugar biosynthesis; ADP-L-glycero-beta-D-manno-heptose biosynthesis; ADP-L-glycero-beta-D-manno-heptose from D-glycero-beta-D-manno-heptose 7-phosphate: step 3/4. Catalyzes the phosphorylation of D-glycero-D-manno-heptose 7-phosphate at the C-1 position to selectively form D-glycero-beta-D-manno-heptose-1,7-bisphosphate. Functionally, catalyzes the ADP transfer from ATP to D-glycero-beta-D-manno-heptose 1-phosphate, yielding ADP-D-glycero-beta-D-manno-heptose. This is Bifunctional protein HldE from Campylobacter jejuni subsp. jejuni serotype O:6 (strain 81116 / NCTC 11828).